A 430-amino-acid polypeptide reads, in one-letter code: Putative cytochrome P450 139 (430 aa).

Cys-372 contributes to the heme binding site.

This sequence belongs to the cytochrome P450 family. It depends on heme as a cofactor.

The chain is Putative cytochrome P450 139 (cyp139) from Mycobacterium bovis (strain ATCC BAA-935 / AF2122/97).